The primary structure comprises 343 residues: Thymidine kinase (343 aa).

Gly27 to Ser34 contacts ATP. The active-site Proton acceptor is Glu56. The substrate site is built by Tyr74 and Gln98. Position 188 (Arg188) interacts with ATP. Residue Arg194 coordinates substrate.

It belongs to the herpesviridae thymidine kinase family. In terms of assembly, homodimer.

It catalyses the reaction thymidine + ATP = dTMP + ADP + H(+). Its function is as follows. Catalyzes the transfer of the gamma-phospho group of ATP to thymidine to generate dTMP in the salvage pathway of pyrimidine synthesis. The dTMP serves as a substrate for DNA polymerase during viral DNA replication. Allows the virus to be reactivated and to grow in non-proliferative cells lacking a high concentration of phosphorylated nucleic acid precursors. In Felidae (cat family), this protein is Thymidine kinase.